The chain runs to 147 residues: Large ribosomal subunit protein uL13 (147 aa).

Belongs to the universal ribosomal protein uL13 family. In terms of assembly, part of the 50S ribosomal subunit.

This protein is one of the early assembly proteins of the 50S ribosomal subunit, although it is not seen to bind rRNA by itself. It is important during the early stages of 50S assembly. This Paenarthrobacter aurescens (strain TC1) protein is Large ribosomal subunit protein uL13.